A 173-amino-acid chain; its full sequence is Shikimate kinase (173 aa).

Gly-16–Thr-21 serves as a coordination point for ATP. Thr-20 is a Mg(2+) binding site. Asp-38, Arg-62, and Gly-83 together coordinate substrate. Arg-120 is an ATP binding site. Arg-139 is a substrate binding site. Position 156 (Arg-156) interacts with ATP.

This sequence belongs to the shikimate kinase family. In terms of assembly, monomer. The cofactor is Mg(2+).

Its subcellular location is the cytoplasm. The catalysed reaction is shikimate + ATP = 3-phosphoshikimate + ADP + H(+). It functions in the pathway metabolic intermediate biosynthesis; chorismate biosynthesis; chorismate from D-erythrose 4-phosphate and phosphoenolpyruvate: step 5/7. In terms of biological role, catalyzes the specific phosphorylation of the 3-hydroxyl group of shikimic acid using ATP as a cosubstrate. In Corynebacterium diphtheriae (strain ATCC 700971 / NCTC 13129 / Biotype gravis), this protein is Shikimate kinase.